We begin with the raw amino-acid sequence, 357 residues long: Histidinol-phosphate aminotransferase (357 aa).

K222 carries the post-translational modification N6-(pyridoxal phosphate)lysine.

Belongs to the class-II pyridoxal-phosphate-dependent aminotransferase family. Histidinol-phosphate aminotransferase subfamily. In terms of assembly, homodimer. Pyridoxal 5'-phosphate serves as cofactor.

It carries out the reaction L-histidinol phosphate + 2-oxoglutarate = 3-(imidazol-4-yl)-2-oxopropyl phosphate + L-glutamate. It functions in the pathway amino-acid biosynthesis; L-histidine biosynthesis; L-histidine from 5-phospho-alpha-D-ribose 1-diphosphate: step 7/9. The protein is Histidinol-phosphate aminotransferase of Leuconostoc mesenteroides subsp. mesenteroides (strain ATCC 8293 / DSM 20343 / BCRC 11652 / CCM 1803 / JCM 6124 / NCDO 523 / NBRC 100496 / NCIMB 8023 / NCTC 12954 / NRRL B-1118 / 37Y).